Reading from the N-terminus, the 146-residue chain is MVVKIRRAGNICRLFEEDLSQYRGEYEDCVDYLPEILFLLAELLRSESLEEVDRLKVAAALGYSVSPLDMFPEEIYGPYSFLGDLFVSLTVLRDVVDAIGLNTVENLWRGEVRLFDLLEDCYNRVSKELGAKKKLFLKHVGLDLIG.

This is an uncharacterized protein from Methanothermobacter thermautotrophicus (Methanobacterium thermoformicicum).